The chain runs to 187 residues: Elongation factor P (187 aa).

It belongs to the elongation factor P family.

The protein resides in the cytoplasm. It participates in protein biosynthesis; polypeptide chain elongation. Involved in peptide bond synthesis. Stimulates efficient translation and peptide-bond synthesis on native or reconstituted 70S ribosomes in vitro. Probably functions indirectly by altering the affinity of the ribosome for aminoacyl-tRNA, thus increasing their reactivity as acceptors for peptidyl transferase. In Mycolicibacterium vanbaalenii (strain DSM 7251 / JCM 13017 / BCRC 16820 / KCTC 9966 / NRRL B-24157 / PYR-1) (Mycobacterium vanbaalenii), this protein is Elongation factor P.